Reading from the N-terminus, the 267-residue chain is 2-keto-3-deoxy-L-rhamnonate aldolase (267 aa).

The active-site Proton acceptor is H49. Q151 is a substrate binding site. Residue E153 participates in Mg(2+) binding. The substrate site is built by A178 and D179. Position 179 (D179) interacts with Mg(2+).

It belongs to the HpcH/HpaI aldolase family. KDR aldolase subfamily. As to quaternary structure, homohexamer. Requires Mg(2+) as cofactor.

It catalyses the reaction 2-dehydro-3-deoxy-L-rhamnonate = (S)-lactaldehyde + pyruvate. Its function is as follows. Catalyzes the reversible retro-aldol cleavage of 2-keto-3-deoxy-L-rhamnonate (KDR) to pyruvate and lactaldehyde. This is 2-keto-3-deoxy-L-rhamnonate aldolase from Klebsiella pneumoniae subsp. pneumoniae (strain ATCC 700721 / MGH 78578).